The primary structure comprises 194 residues: Calcium-binding protein J (194 aa).

EF-hand domains lie at 62–97 (WDKD…MTKA) and 98–133 (PVVE…AVAC). 9 residues coordinate Ca(2+): Asp-75, Asp-77, Asn-79, Glu-86, Asp-111, Asp-113, Ser-115, His-117, and Glu-122.

This sequence belongs to the recoverin family.

In Dictyostelium discoideum (Social amoeba), this protein is Calcium-binding protein J (cbpJ).